A 175-amino-acid polypeptide reads, in one-letter code: ATP-dependent protease subunit HslV (175 aa).

Threonine 2 is a catalytic residue. Na(+)-binding residues include alanine 156, cysteine 159, and threonine 162.

It belongs to the peptidase T1B family. HslV subfamily. In terms of assembly, a double ring-shaped homohexamer of HslV is capped on each side by a ring-shaped HslU homohexamer. The assembly of the HslU/HslV complex is dependent on binding of ATP.

The protein localises to the cytoplasm. It carries out the reaction ATP-dependent cleavage of peptide bonds with broad specificity.. Allosterically activated by HslU binding. Protease subunit of a proteasome-like degradation complex believed to be a general protein degrading machinery. This Rhizobium etli (strain ATCC 51251 / DSM 11541 / JCM 21823 / NBRC 15573 / CFN 42) protein is ATP-dependent protease subunit HslV.